A 387-amino-acid chain; its full sequence is Protein disulfide isomerase pTAC5, chloroplastic (387 aa).

The transit peptide at 1–40 (MASSSLPLSLPFPLRSLTSTTRSLPFQCSPLFFSIPSSIV) directs the protein to the chloroplast. Coiled-coil stretches lie at residues 72 to 106 (EQRWIRERESLLQEISDLQLRIQSLESRNSQLGNS) and 143 to 163 (REQIVEEVEEEEKRVIIAEEK). A CR-type zinc finger spans residues 318–387 (PVDRSESTNT…CDVCDGKKNL (70 aa)).

In terms of assembly, interacts with HSP21; the formed complex associates with the plastid-encoded RNA polymerase (PEP) complex not only during transcription initiation, but also during elongation and termination, and with a stronger efficiency in illuminated chloroplasts. Binds to promoter regions of PEP-dependent genes, especially after a heat stress. Interacts with FLN2.

The protein localises to the plastid. It is found in the chloroplast stroma. The protein resides in the chloroplast nucleoid. It catalyses the reaction Catalyzes the rearrangement of -S-S- bonds in proteins.. In terms of biological role, exhibits zinc-dependent disulfide isomerase activity. Required for seedling and chloroplast development under heat stress, probably by maintaining plastid-encoded RNA polymerase (PEP)-dependent transcription. The polypeptide is Protein disulfide isomerase pTAC5, chloroplastic (Arabidopsis thaliana (Mouse-ear cress)).